The primary structure comprises 186 residues: ATP synthase subunit delta (186 aa).

The protein belongs to the ATPase delta chain family. F-type ATPases have 2 components, F(1) - the catalytic core - and F(0) - the membrane proton channel. F(1) has five subunits: alpha(3), beta(3), gamma(1), delta(1), epsilon(1). F(0) has three main subunits: a(1), b(2) and c(10-14). The alpha and beta chains form an alternating ring which encloses part of the gamma chain. F(1) is attached to F(0) by a central stalk formed by the gamma and epsilon chains, while a peripheral stalk is formed by the delta and b chains.

It localises to the cell inner membrane. In terms of biological role, f(1)F(0) ATP synthase produces ATP from ADP in the presence of a proton or sodium gradient. F-type ATPases consist of two structural domains, F(1) containing the extramembraneous catalytic core and F(0) containing the membrane proton channel, linked together by a central stalk and a peripheral stalk. During catalysis, ATP synthesis in the catalytic domain of F(1) is coupled via a rotary mechanism of the central stalk subunits to proton translocation. Its function is as follows. This protein is part of the stalk that links CF(0) to CF(1). It either transmits conformational changes from CF(0) to CF(1) or is implicated in proton conduction. This chain is ATP synthase subunit delta, found in Bradyrhizobium diazoefficiens (strain JCM 10833 / BCRC 13528 / IAM 13628 / NBRC 14792 / USDA 110).